The sequence spans 604 residues: Testis-expressed protein 13C-1 (604 aa).

4 disordered regions span residues 314–337, 374–397, 485–523, and 538–580; these read EGEG…SHKD, PVMP…RPKI, CLNA…HPRK, and ATKQ…SANC. A compositionally biased stretch (polar residues) spans 322-333; sequence QGTSLHGDSSNN. Residues 544–572 show a composition bias toward basic and acidic residues; it reads KQPEGIKSLESKQPQETKSSESKQQEKPL.

The protein belongs to the TEX13 family.

Its function is as follows. Plays a role in transcriptional repression. This chain is Testis-expressed protein 13C-1, found in Mus musculus (Mouse).